A 190-amino-acid chain; its full sequence is Transcription factor E (190 aa).

In terms of domain architecture, HTH TFE/IIEalpha-type spans 4–87 (KNKALLEIAK…YWHLETKRLP (84 aa)). The interval 170–190 (PSPKKEKKKTRAKAKRKTRKK) is disordered. The span at 174–190 (KEKKKTRAKAKRKTRKK) shows a compositional bias: basic residues.

The protein belongs to the TFE family. As to quaternary structure, monomer. Interaction with RNA polymerase subunits RpoF and RpoE is necessary for Tfe stimulatory transcription activity. Able to interact with Tbp and RNA polymerase in the absence of DNA promoter. Interacts both with the preinitiation and elongation complexes.

Functionally, transcription factor that plays a role in the activation of archaeal genes transcribed by RNA polymerase. Facilitates transcription initiation by enhancing TATA-box recognition by TATA-box-binding protein (Tbp), and transcription factor B (Tfb) and RNA polymerase recruitment. Not absolutely required for transcription in vitro, but particularly important in cases where Tbp or Tfb function is not optimal. It dynamically alters the nucleic acid-binding properties of RNA polymerases by stabilizing the initiation complex and destabilizing elongation complexes. Seems to translocate with the RNA polymerase following initiation and acts by binding to the non template strand of the transcription bubble in elongation complexes. The protein is Transcription factor E of Pyrococcus abyssi (strain GE5 / Orsay).